The sequence spans 416 residues: Serine/threonine-protein kinase 26 (416 aa).

An N-acetylalanine modification is found at Ala2. At Ser4 the chain carries Phosphoserine. The 251-residue stretch at 24–274 folds into the Protein kinase domain; that stretch reads FTKLERIGKG…AKELLKHKFI (251 aa). ATP contacts are provided by residues 30 to 38 and Lys53; that span reads IGKGSFGEV. Asp144 (proton acceptor) is an active-site residue. Thr178 is modified (phosphothreonine; by autocatalysis). The segment at 297-340 is disordered; that stretch reads EGHSDDESDSEGSDSESTSRENNTHPEWSFTTVRKKPDPKKVQN. Phosphoserine is present on residues Ser300, Ser304, Ser306, Ser309, and Ser325. 2 positions are modified to phosphothreonine: Thr327 and Thr328.

Belongs to the protein kinase superfamily. STE Ser/Thr protein kinase family. STE20 subfamily. Homodimer. Interacts with PDCD10. Interacts with GOLGA2. Interacts with CTTNBP2NL. Interacts with RIPOR1 (via C-terminus); this interaction occurs in a PDCD10-dependent and Rho-independent manner. Interacts with PDCD10; this interaction is required for the association of STK26 with RIPOR1. Part of the core of STRIPAK complexes composed of PP2A catalytic and scaffolding subunits, the striatins (PP2A regulatory subunits), the striatin-associated proteins MOB4, STRIP1 and STRIP2, PDCD10 and members of the STE20 kinases, such as STK24 and STK26. Mg(2+) serves as cofactor.

The protein localises to the cytoplasm. It localises to the golgi apparatus. The catalysed reaction is L-seryl-[protein] + ATP = O-phospho-L-seryl-[protein] + ADP + H(+). It catalyses the reaction L-threonyl-[protein] + ATP = O-phospho-L-threonyl-[protein] + ADP + H(+). Interaction with Golgi matrix protein GOLGA2 leads to autophosphorylation on Thr-178, possibly as a consequence of stabilization of dimer formation. May also be activated by C-terminal cleavage. Its function is as follows. Serine/threonine-protein kinase that acts as a mediator of cell growth. Modulates apoptosis. In association with STK24 negatively regulates Golgi reorientation in polarized cell migration upon RHO activation. Phosphorylates ATG4B at 'Ser-383', thereby increasing autophagic flux. Part of the striatin-interacting phosphatase and kinase (STRIPAK) complexes. STRIPAK complexes have critical roles in protein (de)phosphorylation and are regulators of multiple signaling pathways including Hippo, MAPK, nuclear receptor and cytoskeleton remodeling. Different types of STRIPAK complexes are involved in a variety of biological processes such as cell growth, differentiation, apoptosis, metabolism and immune regulation. The polypeptide is Serine/threonine-protein kinase 26 (Homo sapiens (Human)).